A 322-amino-acid chain; its full sequence is Arginase (322 aa).

Residues His-113, Asp-141, His-143, and Asp-145 each contribute to the Mn(2+) site. Residues 143 to 147, 154 to 156, and Asp-200 each bind substrate; these read HADIN and SGN. Positions 247 and 249 each coordinate Mn(2+). Residues Thr-261 and Glu-292 each contribute to the substrate site.

This sequence belongs to the arginase family. As to quaternary structure, homotrimer. Mn(2+) serves as cofactor.

The catalysed reaction is L-arginine + H2O = urea + L-ornithine. It functions in the pathway nitrogen metabolism; urea cycle; L-ornithine and urea from L-arginine: step 1/1. This Coccidioides posadasii (strain C735) (Valley fever fungus) protein is Arginase (ARG).